The primary structure comprises 950 residues: Serine/threonine-protein phosphatase 4 regulatory subunit 1 (950 aa).

HEAT repeat units follow at residues 1 to 25 (MADLSLLQEDLQEDADGFGVDDYSS), 26 to 63 (ESDVIIIPSALDFVSQDEMLTPLGRLDKYAASENIFNR), 65 to 81 (MVARSLLDTLREVCDDE), 82 to 119 (RDCIAVLERISRLADDSEPTVRAELMEQVPHIALFCQE), 127 to 164 (AFSKFLLPIVVRYLADQNNQVRKTSQAALLALLEQELI), 168 to 206 (DVETKVCPVLIELTAPDSNDDVKTEAVAIMCKMAPMVGK), 208 to 246 (ITERLILPRFCEMCCDCRMFHVRKVCAANFGDICSVVGQ), 248 to 285 (ATEEMLLPRFFQLCSDNVWGVRKACAECFMAVSCATCQ), and 287 to 324 (IRRTKLSALFINLISDPSRWVRQAAFQSLGPFISTFAN). Disordered regions lie at residues 326-374 (SSSG…SVSN), 413-438 (ESHQEAASNENDKKPGNYKSMLRPEV), and 473-499 (EQNSGGKPSPEGPEEESEGPVPSSPNI). Basic and acidic residues predominate over residues 332–365 (FKEESKSSEEMSVENKNRTRDQEAPEDVQVRPED). HEAT repeat units follow at residues 505 to 542 (KELEEMIENLEPHIDDPDVKAQVEVLSAALRASSLDAH), 568 to 606 (INQEDSVPLISDAVENMDSTLHYIHSDSDLSNNSSFSPD), 698 to 734 (LTAADLVPIFNGFLKDLDEVRIGVLKHLHDFLKLLHI), 799 to 837 (WISYKLVSEMVKKLHAATPPTFGVDLINELVENFGRCPK), and 861 to 898 (QFAVHLMPHLLTLANDRVPNVRVLLAKTLRQTLLEKDY). Serine 935 carries the phosphoserine modification.

In terms of assembly, serine/threonine-protein phosphatase 4 (PP4) occurs in different assemblies of the catalytic and one or more regulatory subunits. Component of the PP4 complex PPP4C-PPP4R1. Interacts with HDAC3. As to quaternary structure, (Microbial infection) Interacts with merkel polyomavirus small tumor antigen; this interaction bridges small tumor antigen with NEMO to inhibit NF-kappa-B. In terms of tissue distribution, widely expressed with high expression in cultured mesangial cells. Isoform 1 and isoform 2 are expressed in renal tissues.

Functionally, regulatory subunit of serine/threonine-protein phosphatase 4. May play a role in regulation of cell division in renal glomeruli. The PPP4C-PPP4R1 PP4 complex may play a role in dephosphorylation and regulation of HDAC3. Plays a role in the inhibition of TNF-induced NF-kappa-B activation by regulating the dephosphorylation of TRAF2. In terms of biological role, (Microbial infection) Participates in merkel polyomavirus-mediated inhibition of NF-kappa-B by bridging viral small tumor antigen with NEMO. This Homo sapiens (Human) protein is Serine/threonine-protein phosphatase 4 regulatory subunit 1 (PPP4R1).